The sequence spans 243 residues: Ice-binding protein K3-B1 (243 aa).

Residues 1 to 20 (MFSASSLLAVIALAISSVSA) form the signal peptide.

It belongs to the ice-binding protein family.

Its function is as follows. Binds to the surface of ice crystals. Has low thermal hysteresis (TH) activity, which is the ability to lower the freezing point of an aqueous solution below its melting point. The TH activity of this protein is approximately 0.3 degrees Celsius at 11 mM. The polypeptide is Ice-binding protein K3-B1 (Typhula ishikariensis (Gray snow mold fungus)).